The chain runs to 196 residues: Probable nicotinate-nucleotide adenylyltransferase (196 aa).

The protein belongs to the NadD family.

It carries out the reaction nicotinate beta-D-ribonucleotide + ATP + H(+) = deamido-NAD(+) + diphosphate. The protein operates within cofactor biosynthesis; NAD(+) biosynthesis; deamido-NAD(+) from nicotinate D-ribonucleotide: step 1/1. Its function is as follows. Catalyzes the reversible adenylation of nicotinate mononucleotide (NaMN) to nicotinic acid adenine dinucleotide (NaAD). The chain is Probable nicotinate-nucleotide adenylyltransferase from Caldicellulosiruptor bescii (strain ATCC BAA-1888 / DSM 6725 / KCTC 15123 / Z-1320) (Anaerocellum thermophilum).